A 1492-amino-acid chain; its full sequence is ATP-binding cassette sub-family C member 10 (1492 aa).

A run of 9 helical transmembrane segments spans residues 32–52, 70–90, 102–122, 133–153, 172–192, 293–313, 320–340, 391–411, and 414–434; these read LVLS…YLGT, LAAS…VALP, VLAG…LWVL, PLAL…TVLW, LCLL…WAAP, LVGT…VGFL, LSHG…GAVL, LLNF…LAIT, and LLYQ…LLLV. The 279-residue stretch at 285–563 folds into the ABC transmembrane type-1 1 domain; the sequence is YLALGLLKLV…FPWVINGLLE (279 aa). Threonine 463 carries the phosphothreonine modification. At serine 467 the chain carries Phosphoserine. Transmembrane regions (helical) follow at residues 507 to 527 and 538 to 558; these read VYLW…TYVL and FTAL…PWVI. The ABC transporter 1 domain maps to 598 to 824; it reads LELHGALFSW…VQAVPKAWAE (227 aa). 633–640 is an ATP binding site; sequence GKVGCGKS. Positions 825 to 860 are disordered; it reads NGQESDSATAQSVQNPEKTKEGLEEEQSTSGRLLQE. Polar residues predominate over residues 826 to 840; that stretch reads GQESDSATAQSVQNP. 6 helical membrane passes run 875 to 895, 933 to 953, 974 to 994, 1051 to 1071, 1153 to 1173, and 1182 to 1202; these read AYWK…LLLM, LFSP…VFPL, IAGV…AGTL, AGLL…LLLL, IRLQ…ALVQ, and GLVG…SGLV. One can recognise an ABC transmembrane type-1 2 domain in the interval 885–1210; it reads ALAILFSLLL…LVSSFTQTEA (326 aa). Residues 1246–1479 enclose the ABC transporter 2 domain; that stretch reads VEFQDVVLAY…PHSLFQQLLQ (234 aa). 1280-1287 contributes to the ATP binding site; the sequence is GRTGSGKS.

Belongs to the ABC transporter superfamily. ABCC family. Conjugate transporter (TC 3.A.1.208) subfamily. In testis, localized to peritubular myoid cells, Leydig cells, along the basal membrane of Sertoli cells, moderately in the adluminal compartment of the seminiferous tubules, and in vascular endothelial cells. In terms of tissue distribution, specifically expressed in spleen. As to expression, widely expressed.

It is found in the cell membrane. It localises to the basolateral cell membrane. The protein resides in the basal cell membrane. The catalysed reaction is ATP + H2O + xenobioticSide 1 = ADP + phosphate + xenobioticSide 2.. It catalyses the reaction an S-substituted glutathione(in) + ATP + H2O = an S-substituted glutathione(out) + ADP + phosphate + H(+). It carries out the reaction 17beta-estradiol 17-O-(beta-D-glucuronate)(in) + ATP + H2O = 17beta-estradiol 17-O-(beta-D-glucuronate)(out) + ADP + phosphate + H(+). The enzyme catalyses leukotriene C4(in) + ATP + H2O = leukotriene C4(out) + ADP + phosphate + H(+). ATP-dependent transporter of the ATP-binding cassette (ABC) family that actively extrudes physiological compounds, and xenobiotics from cells. Lipophilic anion transporter that mediates ATP-dependent transport of glucuronide conjugates such as estradiol-17-beta-o-glucuronide and GSH conjugates such as leukotriene C4 (LTC4). May contribute to regulate the transport of organic compounds in testes across the blood-testis-barrier. Mediates multidrug resistance (MDR) in cancer cells by preventing the intracellular accumulation of certain antitumor drugs, such as, docetaxel and paclitaxel. Does not transport glycocholic acid, taurocholic acid, MTX, folic acid, cAMP, or cGMP. The chain is ATP-binding cassette sub-family C member 10 (ABCC10) from Homo sapiens (Human).